The following is a 450-amino-acid chain: Glucose-6-phosphate isomerase (450 aa).

A Phosphothreonine modification is found at Thr38. Catalysis depends on Glu290, which acts as the Proton donor. Catalysis depends on residues His311 and Lys425.

Belongs to the GPI family.

It localises to the cytoplasm. It catalyses the reaction alpha-D-glucose 6-phosphate = beta-D-fructose 6-phosphate. Its pathway is carbohydrate biosynthesis; gluconeogenesis. The protein operates within carbohydrate degradation; glycolysis; D-glyceraldehyde 3-phosphate and glycerone phosphate from D-glucose: step 2/4. In terms of biological role, catalyzes the reversible isomerization of glucose-6-phosphate to fructose-6-phosphate. In Bacillus licheniformis (strain ATCC 14580 / DSM 13 / JCM 2505 / CCUG 7422 / NBRC 12200 / NCIMB 9375 / NCTC 10341 / NRRL NRS-1264 / Gibson 46), this protein is Glucose-6-phosphate isomerase.